Consider the following 194-residue polypeptide: MSAITITDAAHDYLADLLSKQNTPGIGIRIFITQPGTQYAETCIAYCKPGEEKPDDEPVGLKSFTAYLDAVSVPFLEDALVDYATDRMGGQLTIKAPNAKVPMVNEDSPINERINYYLQTEINPGLASHGGAVSLVDVVDDGIAVLQFGGGCQGCGQADVTLKEGIERTLLERIPELKGVRDVTDHTNKENAYY.

[4Fe-4S] cluster is bound by residues Cys152 and Cys155.

This sequence belongs to the NfuA family. Homodimer. The cofactor is [4Fe-4S] cluster.

Its function is as follows. Involved in iron-sulfur cluster biogenesis. Binds a 4Fe-4S cluster, can transfer this cluster to apoproteins, and thereby intervenes in the maturation of Fe/S proteins. Could also act as a scaffold/chaperone for damaged Fe/S proteins. The sequence is that of Fe/S biogenesis protein NfuA from Pseudomonas entomophila (strain L48).